The chain runs to 294 residues: Probable 2-(5''-triphosphoribosyl)-3'-dephosphocoenzyme-A synthase (294 aa).

This sequence belongs to the CitG/MdcB family.

The enzyme catalyses 3'-dephospho-CoA + ATP = 2'-(5''-triphospho-alpha-D-ribosyl)-3'-dephospho-CoA + adenine. This is Probable 2-(5''-triphosphoribosyl)-3'-dephosphocoenzyme-A synthase from Streptococcus pyogenes serotype M49 (strain NZ131).